The following is a 239-amino-acid chain: Sugar fermentation stimulation protein homolog (239 aa).

The protein belongs to the SfsA family.

The polypeptide is Sugar fermentation stimulation protein homolog (Desulforamulus reducens (strain ATCC BAA-1160 / DSM 100696 / MI-1) (Desulfotomaculum reducens)).